A 1227-amino-acid polypeptide reads, in one-letter code: Methionine synthase (1227 aa).

The region spanning 2–325 (SSKVEQLRAQ…QHIAAMSRAV (324 aa)) is the Hcy-binding domain. The Zn(2+) site is built by cysteine 247, cysteine 310, and cysteine 311. One can recognise a Pterin-binding domain in the interval 356 to 617 (FVNVGERTNV…LPAELRDAVE (262 aa)). The 95-residue stretch at 650 to 744 (QQAEWRSWEV…FIEASKEQGK (95 aa)) folds into the B12-binding N-terminal domain. Methylcob(III)alamin contacts are provided by residues glutamate 694, 756–760 (GDVHD), histidine 759, serine 804, threonine 808, and alanine 860. In terms of domain architecture, B12-binding spans 746–881 (NGKMVIATVK…SDTQRDDFVA (136 aa)). An AdoMet activation domain is found at 897 to 1227 (KKPRTPPVTL…LAPNLGYDAD (331 aa)). Residues aspartate 946, arginine 1134, and 1189 to 1190 (YY) contribute to the S-adenosyl-L-methionine site.

It belongs to the vitamin-B12 dependent methionine synthase family. Methylcob(III)alamin is required as a cofactor. The cofactor is Zn(2+).

It carries out the reaction (6S)-5-methyl-5,6,7,8-tetrahydrofolate + L-homocysteine = (6S)-5,6,7,8-tetrahydrofolate + L-methionine. It functions in the pathway amino-acid biosynthesis; L-methionine biosynthesis via de novo pathway; L-methionine from L-homocysteine (MetH route): step 1/1. Functionally, catalyzes the transfer of a methyl group from methyl-cobalamin to homocysteine, yielding enzyme-bound cob(I)alamin and methionine. Subsequently, remethylates the cofactor using methyltetrahydrofolate. The protein is Methionine synthase (metH) of Escherichia coli (strain K12).